We begin with the raw amino-acid sequence, 729 residues long: MLYKGDTLYLDWLEDGIAELVFDAPGSVNKLDTATVASLGEAIGVLEQQSDLKGLLLRSNKAAFIVGADITEFLSLFLVPEEQLSQWLHFANSVFNRLEDLPVPTIAAVNGYALGGGCECVLATDYRLATPDLRIGLPETKLGIMPGFGGSVRMPRMLGADSALEIIAAGKDVGADQALKIGLVDGVVKAEKLVEGAMAILRQAINGDLDWKAKRQPKLEPLKLSKIEAAMSFTIAKGMVAQTAGKHYPAPITAVKTIEAAARFGREEALNLENKSFVPLAHTNEARALVGIFLNDQYVKGKAKKLTKDVETPKQAAVLGAGIMGGGIAYQSAWKGVPVVMKDINDKSLTLGMTEAAKLLNKQLERGKIDGLKLAGVISTIHPTLDYAGFDRVDVVVEAVVENPKVKKAVLAETEQKVRPDTVLASNTSTIPISELANALERPENFCGMHFFNPVHRMPLVEIIRGEKSSDETIAKVVAWASKMGKTPIVVNDCPGFFVNRVLFPYFAGFSQLLRDGADFRKIDKVMEKQFGWPMGPAYLLDVVGIDTAHHAQAVMAAGFPQRMQKDYRDAIDALFNANRFGQKNGLGFWRYKEDSKGKPKKEEDVVVDDLLAKVSQPKRDFSEEEIIARMMIPMVNEVVRCLEEGIIATPAEADMALVYGLGFPPFHGGAFRWLDTLGSAKYLDMAQQYQHLGPLYEVPEGMRNKARHNEPYYPPVEPARPVGDLKTA.

An enoyl-CoA hydratase/isomerase region spans residues 1–189 (MLYKGDTLYL…KIGLVDGVVK (189 aa)). A substrate-binding site is contributed by D296. Residues 311 to 729 (ETPKQAAVLG…ARPVGDLKTA (419 aa)) are 3-hydroxyacyl-CoA dehydrogenase. Residues M324, D343, 400-402 (VVE), K407, and S429 contribute to the NAD(+) site. The For 3-hydroxyacyl-CoA dehydrogenase activity role is filled by H450. N453 is a binding site for NAD(+). 2 residues coordinate substrate: N500 and Y660. The interval 707 to 729 (ARHNEPYYPPVEPARPVGDLKTA) is disordered.

It in the N-terminal section; belongs to the enoyl-CoA hydratase/isomerase family. The protein in the C-terminal section; belongs to the 3-hydroxyacyl-CoA dehydrogenase family. As to quaternary structure, heterotetramer of two alpha chains (FadB) and two beta chains (FadA).

The enzyme catalyses a (3S)-3-hydroxyacyl-CoA + NAD(+) = a 3-oxoacyl-CoA + NADH + H(+). The catalysed reaction is a (3S)-3-hydroxyacyl-CoA = a (2E)-enoyl-CoA + H2O. It catalyses the reaction a 4-saturated-(3S)-3-hydroxyacyl-CoA = a (3E)-enoyl-CoA + H2O. It carries out the reaction (3S)-3-hydroxybutanoyl-CoA = (3R)-3-hydroxybutanoyl-CoA. The enzyme catalyses a (3Z)-enoyl-CoA = a 4-saturated (2E)-enoyl-CoA. The catalysed reaction is a (3E)-enoyl-CoA = a 4-saturated (2E)-enoyl-CoA. Its pathway is lipid metabolism; fatty acid beta-oxidation. Its function is as follows. Involved in the aerobic and anaerobic degradation of long-chain fatty acids via beta-oxidation cycle. Catalyzes the formation of 3-oxoacyl-CoA from enoyl-CoA via L-3-hydroxyacyl-CoA. It can also use D-3-hydroxyacyl-CoA and cis-3-enoyl-CoA as substrate. In Escherichia coli O6:K15:H31 (strain 536 / UPEC), this protein is Fatty acid oxidation complex subunit alpha.